A 220-amino-acid chain; its full sequence is Acetate CoA-transferase subunit alpha (220 aa).

24–30 serves as a coordination point for CoA; sequence GGFMGIG.

This sequence belongs to the 3-oxoacid CoA-transferase subunit A family. In terms of assembly, heterotetramer composed of two alpha subunits (AtoD) and two beta subunits (AtoA).

The protein resides in the cytoplasm. It carries out the reaction an acyl-CoA + acetate = a carboxylate + acetyl-CoA. It catalyses the reaction acetoacetate + acetyl-CoA = acetoacetyl-CoA + acetate. The enzyme catalyses butanoate + acetyl-CoA = butanoyl-CoA + acetate. The catalysed reaction is acetoacetate + butanoyl-CoA = acetoacetyl-CoA + butanoate. It functions in the pathway lipid metabolism; short-chain fatty acid metabolism. Its activity is regulated as follows. Inhibited by p-chloromercuribenzoate. Coenzyme A transferase which is involved in short-chain fatty acid degradation and catalyzes the activation of short-chain fatty acids to their respective CoA thiolesters. During acetoacetate degradation, catalyzes the transfer of CoA from acetyl-CoA to acetoacetate by a mechanism involving a covalent enzyme-CoA compound as a reaction intermediate. Utilizes a variety of short chain acyl-CoA and carboxylic acid substrates but exhibits maximal activity with normal and 3-keto substrates. This is Acetate CoA-transferase subunit alpha from Escherichia coli (strain K12).